The following is a 254-amino-acid chain: uncharacterized protein (254 aa).

This is an uncharacterized protein from Escherichia coli (strain K12).